Consider the following 952-residue polypeptide: MEVRRGDTCPRPHPSGLREEGLEPKVAFPGGANRCWNLGADAGSRLTDVFGSVMLTGSASFYDCYTSQSEDNVDLRQTYTPFSSTEYSSSVDSSLFCAPWSTYGDDIKQPSNSQISIKNRIQTERNDYGSETDLYGLVSNILEEQDKSQPYFAEGTCSSNLKSVWPMNTSRFADHHDLLTETKRPIDTVISQQAFYSDESVSAMEKQYLRNSNLTPQQKIDELHHGFTGLDLEEQWMYPSRSDHSNCHNIQTNDTAKTTFQEYPLIKNCFTPQTGLSDIMKESGVDIYHYGRDRICTKGLEAPLQQKRAEMFLSQFNRYNENVDYCRYPEYVHPNKAKLNKCSNFSVQDSKKLANGTPETPTVEADTYTKLFQVKPANQKKMEETIPDQQNFTFPKTTPHLTEKQFAKEAVFTADFGLTSEYGLKPHTACPANDFANVTEKQQFAKPDPPHSEYFKSVNLLSNSATSSGGINLNRPTWMNVQTKNNTPIPYRNQGNLMKLNSHLSAASKGSNHSSDFPQLSSTNLTPNSNLFQKYCQENPSAFSSFDFSYSGAERIQSVNHIEGLTKPGEENLFKLVTDKKIKQPNGFCDNYSAQKYGIIENVNKHNFQAKPQSGHYDPEEGPKHLDGLSQNTYQDLLESQGHSNSHRTRGGDNSRVNRTQVSCFSNNYMMGDLRHNQCFQQLGSNGFPLRSTHPFGHSVVPLLDSYDLLSYDDLSHLYPYFNMMYGDNSFSGLMPTFGFQRPIKTRSGPASELHIRLEECCEQWRALEKERKKTELALAKNYPGKKVSSTNNTPVPRLTSNPSRVDRLIVDELRELARVVTLLGKMERLRSSLLHASISTALDRHLESIHIVQSRRKDEIVNASNRQRQGVPRCQDDRDVFALASAIKEMCVATRKTRTALWCALQMTLPKTASTADVVKPLQDTVNCEDKVHESINSSNPMNQRGETNKH.

Disordered stretches follow at residues 1 to 23 (MEVR…EGLE), 609 to 629 (QAKP…LDGL), and 933 to 952 (VHES…TNKH). Residues 617–627 (YDPEEGPKHLD) are compositionally biased toward basic and acidic residues. Positions 936–952 (SINSSNPMNQRGETNKH) are enriched in polar residues.

Interacts with YTHDC2; binds transcript that regulate the mitotic cell cycle inhibiting progression into metaphase, thereby allowing meiotic prophase to proceed normally. Interacts with RBM46. Expressed in fetal ovaries. Expressed in testis.

It is found in the cytoplasm. The protein resides in the nucleus. Functionally, is required for meiosis completion in both male and female germ cells. Confers stability to numerous meiotic mRNAs in gonads allowing proper initiation and progression into meiosis prophase I. The function may involve YTHDC2 and is independent of induction by retinoic acid (RA). Maintains an extended meiotic prophase I by properly promoting the transition from a mitotic to a meiotic cell cycle program by binding transcripts through its interaction with YTHDC2 that regulate the mitotic cell cycle. The sequence is that of Meiosis-specific coiled-coil domain-containing protein MEIOC from Homo sapiens (Human).